A 216-amino-acid chain; its full sequence is Maintenance of carboxysome distribution protein A (216 aa).

Gly18, Gly19, Gly21, Lys22, Thr23, Thr24, and Gln47 together coordinate ATP. Thr23 provides a ligand contact to Mg(2+).

Belongs to the ParA family. McdA subfamily. Homodimerizes in the presence of ATP. Each subunit binds 1 ATP molecule; some residues cross the dimer interface to contact ATP in the other subunit. Forms a complex with McdB.

The protein resides in the cytoplasm. Its subcellular location is the nucleoid. It catalyses the reaction ATP + H2O = ADP + phosphate + H(+). In terms of biological role, mcdA and McdB together mediate carboxysome (Cb) spacing, size, ultrastructure and probably inheritance in the cell, together they prevent Cb aggregation. McdA is an ATPase that forms dynamic gradients on the nucleoid in response to adapter protein McdB, which associates with carboxysomes. The interplay between McdA gradients on the nucleoid and McdB-bound carboxysomes result in the equal spacing of Cbs along the cell length. Its function is as follows. Incorrect positioning (aggregation) of carboxysomes results in reduced CO(2) fixation by encapsulated ribulose-1,5-bisphosphate carboxylase (RuBisCO, cbbL/cbbS), which leads to slower growth. This chain is Maintenance of carboxysome distribution protein A, found in Gloeobacter kilaueensis (strain ATCC BAA-2537 / CCAP 1431/1 / ULC 316 / JS1).